The primary structure comprises 252 residues: Imidazole glycerol phosphate synthase subunit HisF (252 aa).

Active-site residues include Asp-11 and Asp-130.

It belongs to the HisA/HisF family. As to quaternary structure, heterodimer of HisH and HisF.

The protein localises to the cytoplasm. The enzyme catalyses 5-[(5-phospho-1-deoxy-D-ribulos-1-ylimino)methylamino]-1-(5-phospho-beta-D-ribosyl)imidazole-4-carboxamide + L-glutamine = D-erythro-1-(imidazol-4-yl)glycerol 3-phosphate + 5-amino-1-(5-phospho-beta-D-ribosyl)imidazole-4-carboxamide + L-glutamate + H(+). Its pathway is amino-acid biosynthesis; L-histidine biosynthesis; L-histidine from 5-phospho-alpha-D-ribose 1-diphosphate: step 5/9. Functionally, IGPS catalyzes the conversion of PRFAR and glutamine to IGP, AICAR and glutamate. The HisF subunit catalyzes the cyclization activity that produces IGP and AICAR from PRFAR using the ammonia provided by the HisH subunit. This chain is Imidazole glycerol phosphate synthase subunit HisF, found in Syntrophomonas wolfei subsp. wolfei (strain DSM 2245B / Goettingen).